The primary structure comprises 339 residues: Adenosine deaminase (339 aa).

Residues H15 and H17 each contribute to the Zn(2+) site. Substrate is bound by residues H17, D19, and G172. H199 provides a ligand contact to Zn(2+). E202 (proton donor) is an active-site residue. D279 provides a ligand contact to Zn(2+).

It belongs to the metallo-dependent hydrolases superfamily. Adenosine and AMP deaminases family. Adenosine deaminase subfamily. It depends on Zn(2+) as a cofactor.

The catalysed reaction is adenosine + H2O + H(+) = inosine + NH4(+). It catalyses the reaction 2'-deoxyadenosine + H2O + H(+) = 2'-deoxyinosine + NH4(+). Functionally, catalyzes the hydrolytic deamination of adenosine and 2-deoxyadenosine. The polypeptide is Adenosine deaminase (Lacticaseibacillus paracasei (strain ATCC 334 / BCRC 17002 / CCUG 31169 / CIP 107868 / KCTC 3260 / NRRL B-441) (Lactobacillus paracasei)).